The chain runs to 602 residues: Elongation factor 4 (602 aa).

A tr-type G domain is found at 6–188 (DHIRNFSIVA…AIVNKLPAPK (183 aa)). GTP contacts are provided by residues 18–23 (DHGKST) and 135–138 (NKID).

The protein belongs to the TRAFAC class translation factor GTPase superfamily. Classic translation factor GTPase family. LepA subfamily.

Its subcellular location is the cell inner membrane. It carries out the reaction GTP + H2O = GDP + phosphate + H(+). Functionally, required for accurate and efficient protein synthesis under certain stress conditions. May act as a fidelity factor of the translation reaction, by catalyzing a one-codon backward translocation of tRNAs on improperly translocated ribosomes. Back-translocation proceeds from a post-translocation (POST) complex to a pre-translocation (PRE) complex, thus giving elongation factor G a second chance to translocate the tRNAs correctly. Binds to ribosomes in a GTP-dependent manner. This chain is Elongation factor 4, found in Brucella melitensis biotype 2 (strain ATCC 23457).